We begin with the raw amino-acid sequence, 76 residues long: MIYKVFYQETKERSPRREQTKSLYLDIDAETELEGRIQARQIIEKNTAYNIEFIELLSEKALEYEKETGVFEVTEF.

This sequence belongs to the RNA polymerase subunit epsilon family. RNAP is composed of a core of 2 alpha, a beta and a beta' subunit. The core is associated with a delta subunit, and at least one of epsilon or omega. When a sigma factor is associated with the core the holoenzyme is formed, which can initiate transcription.

It carries out the reaction RNA(n) + a ribonucleoside 5'-triphosphate = RNA(n+1) + diphosphate. A non-essential component of RNA polymerase (RNAP). The protein is DNA-directed RNA polymerase subunit epsilon of Streptococcus thermophilus (strain CNRZ 1066).